Consider the following 494-residue polypeptide: MNLNLSLEEVRKLSENYNVIPLYTELLVDTETPLSIFLKLKEKGQFNILLESAEGGEKWGRYSFIITGSSFYLRTRKDIGEIYERGKVNFFETKDPLSKIKEVVKKFIPYHDERLPRFWGGLVGYFAYDVVKFYEPVEDKNPDPIHTYDIYLVLTDVVVIHDNLTGKIKVVVPIFAQNGIEEEYERAKNLIRDTVKKLKERGTTFLNVVEKEPDFKNWRSNFTKEEFEDIVKKAKEYIAQGDVIQVVLSQRFRKRFKGNPDNIYRVLRFLNPSPYMYYLDFDQLKVIGSSPEILVRLEEGRIETRPIAGTRKRGRTEEEDKRLEEDLLSDEKERAEHLMLVDLARNDIGRVAKTGSVRVENFMRIERYSHVMHIVSDVVGELREGYDALDVLKATFPAGTVSGAPKVRAMQIIEELENERRGIYAGSVGYISFQGNMDMAIAIRTAVYRDRDIFVQAGAGIVADSVPEKEWEETVNKAKALMKAIEIAEESQEE.

L-tryptophan is bound by residues serine 52 and 274–276; that span reads PYM. 309–310 serves as a coordination point for chorismate; sequence GT. Residue glutamate 336 participates in Mg(2+) binding. Chorismate-binding positions include tyrosine 424, arginine 444, 458–460, and glycine 460; that span reads GAG. Glutamate 473 serves as a coordination point for Mg(2+).

It belongs to the anthranilate synthase component I family. In terms of assembly, heterotetramer consisting of two non-identical subunits: a beta subunit (TrpG) and a large alpha subunit (TrpE). Requires Mg(2+) as cofactor.

It carries out the reaction chorismate + L-glutamine = anthranilate + pyruvate + L-glutamate + H(+). It participates in amino-acid biosynthesis; L-tryptophan biosynthesis; L-tryptophan from chorismate: step 1/5. Its activity is regulated as follows. Feedback inhibited by tryptophan. In terms of biological role, part of a heterotetrameric complex that catalyzes the two-step biosynthesis of anthranilate, an intermediate in the biosynthesis of L-tryptophan. In the first step, the glutamine-binding beta subunit (TrpG) of anthranilate synthase (AS) provides the glutamine amidotransferase activity which generates ammonia as a substrate that, along with chorismate, is used in the second step, catalyzed by the large alpha subunit of AS (TrpE) to produce anthranilate. In the absence of TrpG, TrpE can synthesize anthranilate directly from chorismate and high concentrations of ammonia. The protein is Anthranilate synthase component 1 (trpE) of Aquifex aeolicus (strain VF5).